The chain runs to 1417 residues: DExH-box ATP-dependent RNA helicase DExH4, chloroplastic (1417 aa).

Positions 1–12 (MAPTKKPQKNKQ) are enriched in basic residues. Residues 1–37 (MAPTKKPQKNKQSKNEIASSLIPNSGHKKPSKAPKLL) are disordered. The transit peptide at 1-61 (MAPTKKPQKN…NFRRTPSPVT (61 aa)) directs the protein to the chloroplast. The Helicase ATP-binding domain maps to 607–781 (LQKLKEKDVL…FGQCPIITAQ (175 aa)). 620-627 (GETGSGKT) lines the ATP pocket. The DEIH box motif lies at 722-725 (DEVH). One can recognise a Helicase C-terminal domain in the interval 868 to 1043 (LLEELICHID…ELCLHIKLLG (176 aa)).

This sequence belongs to the DExH box helicase family.

It is found in the plastid. Its subcellular location is the chloroplast. It carries out the reaction ATP + H2O = ADP + phosphate + H(+). In Arabidopsis thaliana (Mouse-ear cress), this protein is DExH-box ATP-dependent RNA helicase DExH4, chloroplastic.